We begin with the raw amino-acid sequence, 426 residues long: Histidine--tRNA ligase (426 aa).

Belongs to the class-II aminoacyl-tRNA synthetase family. Homodimer.

Its subcellular location is the cytoplasm. The enzyme catalyses tRNA(His) + L-histidine + ATP = L-histidyl-tRNA(His) + AMP + diphosphate + H(+). The chain is Histidine--tRNA ligase from Hydrogenovibrio crunogenus (strain DSM 25203 / XCL-2) (Thiomicrospira crunogena).